Here is a 481-residue protein sequence, read N- to C-terminus: Glycogen synthase (481 aa).

K16 provides a ligand contact to ADP-alpha-D-glucose.

It belongs to the glycosyltransferase 1 family. Bacterial/plant glycogen synthase subfamily.

The enzyme catalyses [(1-&gt;4)-alpha-D-glucosyl](n) + ADP-alpha-D-glucose = [(1-&gt;4)-alpha-D-glucosyl](n+1) + ADP + H(+). The protein operates within glycan biosynthesis; glycogen biosynthesis. Functionally, synthesizes alpha-1,4-glucan chains using ADP-glucose. The sequence is that of Glycogen synthase from Cellvibrio japonicus (strain Ueda107) (Pseudomonas fluorescens subsp. cellulosa).